The chain runs to 287 residues: Pyridoxal kinase PdxY (287 aa).

Substrate is bound by residues Ser10 and 45–46 (TQ). ATP is bound by residues Asp112, Ala144, Glu149, Lys182, and 209–212 (RPLV). Asp224 serves as a coordination point for substrate.

It belongs to the pyridoxine kinase family. PdxY subfamily. Homodimer. Mg(2+) serves as cofactor.

It catalyses the reaction pyridoxal + ATP = pyridoxal 5'-phosphate + ADP + H(+). The protein operates within cofactor metabolism; pyridoxal 5'-phosphate salvage; pyridoxal 5'-phosphate from pyridoxal: step 1/1. In terms of biological role, pyridoxal kinase involved in the salvage pathway of pyridoxal 5'-phosphate (PLP). Catalyzes the phosphorylation of pyridoxal to PLP. This chain is Pyridoxal kinase PdxY, found in Escherichia coli (strain UTI89 / UPEC).